The sequence spans 271 residues: Tryptophan synthase alpha chain (271 aa).

Active-site proton acceptor residues include Glu-56 and Asp-67.

The protein belongs to the TrpA family. As to quaternary structure, tetramer of two alpha and two beta chains.

It catalyses the reaction (1S,2R)-1-C-(indol-3-yl)glycerol 3-phosphate + L-serine = D-glyceraldehyde 3-phosphate + L-tryptophan + H2O. It functions in the pathway amino-acid biosynthesis; L-tryptophan biosynthesis; L-tryptophan from chorismate: step 5/5. In terms of biological role, the alpha subunit is responsible for the aldol cleavage of indoleglycerol phosphate to indole and glyceraldehyde 3-phosphate. In Mycobacterium avium (strain 104), this protein is Tryptophan synthase alpha chain.